A 413-amino-acid chain; its full sequence is Aspartate aminotransferase, cytoplasmic (413 aa).

Residues G39 and W141 each coordinate L-aspartate. The residue at position 149 (S149) is a Phosphoserine. N195 lines the L-aspartate pocket. K259 carries the post-translational modification N6-(pyridoxal phosphate)lysine. R387 provides a ligand contact to L-aspartate.

This sequence belongs to the class-I pyridoxal-phosphate-dependent aminotransferase family. In terms of assembly, homodimer. Requires pyridoxal 5'-phosphate as cofactor.

It localises to the cytoplasm. The enzyme catalyses L-aspartate + 2-oxoglutarate = oxaloacetate + L-glutamate. It catalyses the reaction L-cysteine + 2-oxoglutarate = 2-oxo-3-sulfanylpropanoate + L-glutamate. It carries out the reaction (2S)-2-aminobutanoate + 2-oxoglutarate = 2-oxobutanoate + L-glutamate. The catalysed reaction is 3-sulfino-L-alanine + 2-oxoglutarate = 3-sulfinopyruvate + L-glutamate. Its function is as follows. Biosynthesis of L-glutamate from L-aspartate or L-cysteine. Important regulator of levels of glutamate, the major excitatory neurotransmitter of the vertebrate central nervous system. Acts as a scavenger of glutamate in brain neuroprotection. The aspartate aminotransferase activity is involved in hepatic glucose synthesis during development and in adipocyte glyceroneogenesis. Using L-cysteine as substrate, regulates levels of mercaptopyruvate, an important source of hydrogen sulfide. Mercaptopyruvate is converted into H(2)S via the action of 3-mercaptopyruvate sulfurtransferase (3MST). Hydrogen sulfide is an important synaptic modulator and neuroprotectant in the brain. In Pongo abelii (Sumatran orangutan), this protein is Aspartate aminotransferase, cytoplasmic.